Reading from the N-terminus, the 303-residue chain is Probable 5-dehydro-4-deoxyglucarate dehydratase (303 aa).

It belongs to the DapA family.

The catalysed reaction is 5-dehydro-4-deoxy-D-glucarate + H(+) = 2,5-dioxopentanoate + CO2 + H2O. It functions in the pathway carbohydrate acid metabolism; D-glucarate degradation; 2,5-dioxopentanoate from D-glucarate: step 2/2. This chain is Probable 5-dehydro-4-deoxyglucarate dehydratase, found in Leptothrix cholodnii (strain ATCC 51168 / LMG 8142 / SP-6) (Leptothrix discophora (strain SP-6)).